The primary structure comprises 386 residues: FHA domain-containing protein At4g14490 (386 aa).

The 51-residue stretch at 28–78 folds into the FHA domain; sequence IRVGRIVRGNEIAIKDAGISTKHLRIESDSGNWVIQDLGSSNGTLLNSNAL. The segment at 286-311 is disordered; it reads KNKGKNKKADQKPLKSFENDEVTDSG. Residues 292 to 303 are compositionally biased toward basic and acidic residues; sequence KKADQKPLKSFE.

This chain is FHA domain-containing protein At4g14490, found in Arabidopsis thaliana (Mouse-ear cress).